Consider the following 429-residue polypeptide: MIRSHMLRERAERLLPGGVDSPVRAFRAVGGEPPFLVKAEGACLWDADGNQYLDYFGSWGPMILGHAFPPVIEAIQKQAAFSTSFGASTPSEGDLAELVVRAYPSMEKLRFVSSGTEATMSALRLARAYTKRKYIVKFDGCYHGHSDGLLAKAGSGLATFGIPGSAGVPEEIAQLTLTLPFNNLDAVEAAFAAHRNEIACIIVEPVAGNMGCVVPDEGYLQGLRELTRREGALLIFDEVMTGFRVAFGGVQELRQVRPDLTTLGKIVGGGMPCGAFGGPAEIMDLLAPLGPVYQAGTLSGNPLAMAAGMATVSHLESSKEWLYPQLEQMSAAVAQGVAEEAARAGIPLTTNRQGSMFTWFFTGQPVRDYATAESCDTRRFAQFHRGMLDHGVWLPPSQFEAAFLGVAHTMHHVEQTVTAAREVFAAMQS.

Lys265 is subject to N6-(pyridoxal phosphate)lysine.

It belongs to the class-III pyridoxal-phosphate-dependent aminotransferase family. HemL subfamily. Homodimer. Pyridoxal 5'-phosphate serves as cofactor.

Its subcellular location is the cytoplasm. The catalysed reaction is (S)-4-amino-5-oxopentanoate = 5-aminolevulinate. The protein operates within porphyrin-containing compound metabolism; protoporphyrin-IX biosynthesis; 5-aminolevulinate from L-glutamyl-tRNA(Glu): step 2/2. This chain is Glutamate-1-semialdehyde 2,1-aminomutase, found in Acidobacterium capsulatum (strain ATCC 51196 / DSM 11244 / BCRC 80197 / JCM 7670 / NBRC 15755 / NCIMB 13165 / 161).